Reading from the N-terminus, the 181-residue chain is Large ribosomal subunit protein uL5 (181 aa).

It belongs to the universal ribosomal protein uL5 family. Part of the 50S ribosomal subunit; part of the 5S rRNA/L5/L18/L25 subcomplex. Contacts the 5S rRNA and the P site tRNA. Forms a bridge to the 30S subunit in the 70S ribosome.

Its function is as follows. This is one of the proteins that bind and probably mediate the attachment of the 5S RNA into the large ribosomal subunit, where it forms part of the central protuberance. In the 70S ribosome it contacts protein S13 of the 30S subunit (bridge B1b), connecting the 2 subunits; this bridge is implicated in subunit movement. Contacts the P site tRNA; the 5S rRNA and some of its associated proteins might help stabilize positioning of ribosome-bound tRNAs. This chain is Large ribosomal subunit protein uL5, found in Rickettsia canadensis (strain McKiel).